Reading from the N-terminus, the 432-residue chain is Homeobox protein Hox-D3 (432 aa).

4 disordered regions span residues 43–62 (YSTPHQPYPPPAAASSLDTD), 68–197 (CSIQ…SKRV), 253–280 (QKAKGILHSPASQSPERSPPLGGAAGHV), and 400–432 (HHGPCDPHPTYTDLSAHHSSQGRLPEAPKLTHL). Residues 97–106 (NSQGGGGGSQ) show a composition bias toward gly residues. A compositionally biased stretch (pro residues) spans 116 to 131 (PPQPPPPPPTLPPSSP). Residues 148-158 (NASSSSATISK) are compositionally biased toward polar residues. Residues 160 to 165 (IFPWMK) carry the Antp-type hexapeptide motif. The segment at residues 194-253 (SKRVRTAYTSAQLVELEKEFHFNRYLCRPRRVEMANLLNLTERQIKIWFQNRRMKYKKDQ) is a DNA-binding region (homeobox).

The protein belongs to the Antp homeobox family.

It is found in the nucleus. Functionally, sequence-specific transcription factor which is part of a developmental regulatory system that provides cells with specific positional identities on the anterior-posterior axis. This chain is Homeobox protein Hox-D3 (HOXD3), found in Homo sapiens (Human).